Consider the following 104-residue polypeptide: ATP-dependent Clp protease adapter protein ClpS (104 aa).

The interval 1–20 (MSPDPHEDLGDVLTEPTQKT) is disordered.

It belongs to the ClpS family. Binds to the N-terminal domain of the chaperone ClpA.

In terms of biological role, involved in the modulation of the specificity of the ClpAP-mediated ATP-dependent protein degradation. The polypeptide is ATP-dependent Clp protease adapter protein ClpS (Desulfatibacillum aliphaticivorans).